A 677-amino-acid polypeptide reads, in one-letter code: Polyunsaturated fatty acid lipoxygenase ALOX15B (677 aa).

Residues 2–125 (AKFRVRVSTG…ELVLREGAAK (124 aa)) form the PLAT domain. Glycine 15, glycine 17, aspartate 39, histidine 40, glycine 42, glutamate 44, aspartate 86, and alanine 87 together coordinate Ca(2+). In terms of domain architecture, Lipoxygenase spans 126 to 677 (VSWQDHHRTL…PPLIENSVSI (552 aa)). Fe cation is bound by residues histidine 374, histidine 379, histidine 554, and isoleucine 677.

This sequence belongs to the lipoxygenase family. Requires Fe cation as cofactor.

The protein localises to the cytoplasm. It localises to the cytosol. It is found in the cell membrane. The protein resides in the cytoskeleton. Its subcellular location is the membrane. The protein localises to the cell junction. It localises to the adherens junction. It is found in the focal adhesion. The protein resides in the nucleus. It catalyses the reaction (5Z,8Z,11Z,14Z)-eicosatetraenoate + O2 = (15S)-hydroperoxy-(5Z,8Z,11Z,13E)-eicosatetraenoate. The enzyme catalyses (9Z,12Z)-octadecadienoate + O2 = 13-hydroperoxy-(9Z,11E)-octadecadienoate. The catalysed reaction is (5S)-hydroxy-(6E,8Z,11Z,14Z)-eicosatetraenoate + O2 = (5S)-hydroxy-(15S)-hydroperoxy-(6E,8Z,11Z,13E)-eicosatetraenoate. It carries out the reaction (5Z,8Z,11Z,14Z)-eicosatetraenoate + O2 = 5-hydroperoxy-(6E,8Z,11Z,14Z)-eicosatetraenoate. It catalyses the reaction (5S,6R)-dihydroxy-(7E,9E,11Z,14Z)-eicosatetraenoate + O2 = (5S,6R)-dihydroxy-(15S)-hydroperoxy-(7E,9E,11Z,13E)-eicosatetraenoate. The enzyme catalyses (5S)-hydroperoxy-(6E,8Z,11Z,14Z)-eicosatetraenoate + O2 = (5S,15S)-dihydroperoxy-(6E,8Z,11Z,13E)-eicosatetraenoate. The catalysed reaction is 2-(5Z,8Z,11Z,14Z-eicosatetraenoyl)-glycerol + O2 = 2-[15(S)-hydroperoxy-(5Z,8Z,11Z,13E)-eicosatetraenoyl]-glycerol. It carries out the reaction (8S)-hydroperoxy-(5Z,9E,11Z,14Z)-eicosatetraenoate + O2 = (8S,15S)-dihydroperoxy-(5Z,9E,11Z,13E)-eicosatetraenoate. It catalyses the reaction N-(5Z,8Z,11Z,14Z)-eicosatetraenoyl-L-alanine + O2 = N-(15S)-hydroperoxy-(5Z,8Z,11Z,13E)-eicosatetraenoyl-alanine. The enzyme catalyses N-(5Z,8Z,11Z,14Z)-eicosatetraenoyl-gamma-aminobutanoate + O2 = N-(15S)-hydroperoxy-(5Z,8Z,11Z,13E)-eicosatetraenoyl-gamma-aminobutanoate. The catalysed reaction is N-(5Z,8Z,11Z,14Z)-eicosatetraenoyl-glycine + O2 = N-(15S)-hydroperoxy-(5Z,8Z,11Z,13E)-eicosatetraenoyl-glycine. It carries out the reaction N-(5Z,8Z,11Z,14Z)-eicosatetraenoyl-taurine + O2 = N-(15S)-hydroperoxy-(5Z,8Z,11Z,13E)-eicosatetraenoyl-taurine. It catalyses the reaction 2-(5Z,8Z,11Z,14Z-eicosatetraenoyl)-glycerol + O2 = 2-[12-hydroperoxy-(5Z,8Z,10E,14Z)-eicosatetraenoyl]-glycerol. The enzyme catalyses 1-octadecanoyl-2-(5Z,8Z,11Z,14Z-eicosatetraenoyl)-sn-glycero-3-phosphocholine + O2 = 1-octadecanoyl-2-(15-hydroperoxy-5Z,8Z,11Z,13E-eicosatetraenoyl)-sn-glycero-3-phosphocholine. The catalysed reaction is a 1-acyl-2-(5Z,8Z,11Z,14Z-eicosatetraenoyl)-sn-glycero-3-phospho-(1D-myo-inositol) + O2 = a 1-acyl-2-(15-hydroperoxy-5Z,8Z,11Z,13E-eicosatetraenoyl)-sn-glycero-3-phospho-(1D-myo-inositol). It carries out the reaction a 1-acyl-2-(8Z,11Z,14Z-eicosatrienoyl)-sn-glycero-3-phospho-(1D-myo-inositol) + O2 = a 1-acyl-2-(15-hydroperoxy-8Z,11Z,13E-eicosatrienoyl)-sn-glycero-3-phospho-(1D-myo-inositol). It catalyses the reaction 1-octadecanoyl-2-(5Z,8Z,11Z,14Z)-eicosatetraenoyl-sn-glycero-3-phosphoethanolamine + O2 = 1-octadecanoyl-2-(15-hydroperoxy-5Z,8Z,11Z,13E-eicosatetraenoyl)-sn-glycero-3-phosphoethanolamine. The enzyme catalyses 1-octadecanoyl-2-(5Z,8Z,11Z,14Z-eicosatetraenoyl)-sn-glycero-3-phospho-(1D-myo-inositol) + O2 = 1-octadecanoyl-2-(15-hydroperoxy-5Z,8Z,11Z,13E-eicosatetraenoyl)-sn-glycero-3-phospho-(1D-myo-inositol). The catalysed reaction is (8Z,11Z,14Z)-eicosatrienoate + O2 = 15-hydroperoxy-(8Z,11Z,13E)-eicosatrienoate. It carries out the reaction (7S)-hydroperoxy-(4Z,8E,10Z,13Z,16Z,19Z)-docosahexaenoate + O2 = (7S,17S)-dihydroperoxy-(4Z,8E,10Z,13Z,15E,19Z)-docosahexaenoate. Its pathway is lipid metabolism; hydroperoxy eicosatetraenoic acid biosynthesis. Non-heme iron-containing dioxygenase that catalyzes the stereo-specific peroxidation of free and esterified polyunsaturated fatty acids (PUFAs) generating a spectrum of bioactive lipid mediators. Inserts a peroxyl group at C15 of arachidonate ((5Z,8Z,11Z,14Z)-eicosatetraenoate) producing (15S)-hydroperoxyeicosatetraenoate/(15S)-HPETE. Also peroxidizes linoleate ((9Z,12Z)-octadecadienoate) to 13-hydroperoxyoctadecadienoate/13-HPODE. Oxygenates arachidonyl derivatives such as 2-arachidonoylglycerol (2-AG) leading to the production and extracellular release of 15-hydroxyeicosatetraenoyl glycerol (15-HETE-G) that acts as a peroxisome proliferator-activated receptor alpha agonist. Has the ability to efficiently class-switch ALOX5 pro-inflammatory mediators into anti-inflammatory intermediates. Participates in the sequential oxidations of DHA ((4Z,7Z,10Z,13Z,16Z,19Z)-docosahexaenoate) to generate specialized pro-resolving mediators (SPMs) resolvin D5 ((7S,17S)-diHPDHA), which can actively down-regulate the immune response and have anti-aggregation properties with platelets. In addition to free PUFAs hydrolyzed from phospholipids, it directly oxidizes PUFAs esterified to membrane-bound phospholipids. Has no detectable 8S-lipoxygenase activity on arachidonate but reacts with (8S)-HPETE to produce (8S,15S)-diHPETE. May regulate progression through the cell cycle and cell proliferation. May also regulate cytokine secretion by macrophages and therefore play a role in the immune response. May also regulate macrophage differentiation into proatherogenic foam cells. The polypeptide is Polyunsaturated fatty acid lipoxygenase ALOX15B (Rattus norvegicus (Rat)).